The sequence spans 128 residues: uncharacterized protein (128 aa).

This is an uncharacterized protein from Schizosaccharomyces pombe (strain 972 / ATCC 24843) (Fission yeast).